Reading from the N-terminus, the 868-residue chain is Protein translocase subunit SecA (868 aa).

Residues glutamine 85, 103-107, and aspartate 508 each bind ATP; that span reads GEGKT.

It belongs to the SecA family. In terms of assembly, monomer and homodimer. Part of the essential Sec protein translocation apparatus which comprises SecA, SecYEG and auxiliary proteins SecDF. Other proteins may also be involved.

It is found in the cell membrane. The protein resides in the cytoplasm. The catalysed reaction is ATP + H2O + cellular proteinSide 1 = ADP + phosphate + cellular proteinSide 2.. Functionally, part of the Sec protein translocase complex. Interacts with the SecYEG preprotein conducting channel. Has a central role in coupling the hydrolysis of ATP to the transfer of proteins into and across the cell membrane, serving as an ATP-driven molecular motor driving the stepwise translocation of polypeptide chains across the membrane. The polypeptide is Protein translocase subunit SecA (Deinococcus radiodurans (strain ATCC 13939 / DSM 20539 / JCM 16871 / CCUG 27074 / LMG 4051 / NBRC 15346 / NCIMB 9279 / VKM B-1422 / R1)).